A 341-amino-acid polypeptide reads, in one-letter code: ATPase GET3 (341 aa).

34–41 (KGGVGKTT) contributes to the ATP binding site. Asp63 is a catalytic residue. ATP is bound by residues Glu245 and Asn272. Positions 283 and 286 each coordinate Zn(2+).

Belongs to the arsA ATPase family. In terms of assembly, homodimer.

The protein localises to the cytoplasm. Its subcellular location is the endoplasmic reticulum. In terms of biological role, ATPase required for the post-translational delivery of tail-anchored (TA) proteins to the endoplasmic reticulum. Recognizes and selectively binds the transmembrane domain of TA proteins in the cytosol. This complex then targets to the endoplasmic reticulum by membrane-bound receptors, where the tail-anchored protein is released for insertion. This process is regulated by ATP binding and hydrolysis. ATP binding drives the homodimer towards the closed dimer state, facilitating recognition of newly synthesized TA membrane proteins. ATP hydrolysis is required for insertion. Subsequently, the homodimer reverts towards the open dimer state, lowering its affinity for the membrane-bound receptor, and returning it to the cytosol to initiate a new round of targeting. In Ajellomyces capsulatus (strain G186AR / H82 / ATCC MYA-2454 / RMSCC 2432) (Darling's disease fungus), this protein is ATPase GET3.